The following is a 501-amino-acid chain: Cryptochrome-1 (501 aa).

The Photolyase/cryptochrome alpha/beta domain occupies 5-134 (KKTIVWFRRD…SVQSYNGDLC (130 aa)). FAD-binding positions include Y231 and 243-247 (TSLLS). R356 provides a ligand contact to ATP. FAD is bound by residues D386 and D388. ATP is bound at residue D405.

It belongs to the DNA photolyase class-1 family. Homodimer. FAD serves as cofactor. It depends on (6R)-5,10-methylene-5,6,7,8-tetrahydrofolate as a cofactor.

Functionally, mediates blue light-induced gene expression in addition to its role in blue light-dependent inhibition of stem growth. This Sinapis alba (White mustard) protein is Cryptochrome-1 (PHR1).